The chain runs to 58 residues: Single-pass membrane and coiled-coil domain-containing protein 4 homolog (58 aa).

Residues 1-31 (MRQLKGKVKETRKQKKERKLDNLETQAKIRT) adopt a coiled-coil conformation. Residues 31-51 (TVVLPALGVLAVFLVLFVYLK) traverse the membrane as a helical segment.

Belongs to the SMCO4 family.

Its subcellular location is the membrane. The sequence is that of Single-pass membrane and coiled-coil domain-containing protein 4 homolog from Drosophila melanogaster (Fruit fly).